The primary structure comprises 173 residues: Lipoprotein signal peptidase (173 aa).

Transmembrane regions (helical) follow at residues 7–27 (FFWFTALLSLLLDHLTKLWVV), 41–61 (LWPGVFHLTYVTNTGAAFSLF), 70–90 (WLSLGVSVGLMALAILGPNFN), and 95–115 (AGYGFLLGGAAGNGIDRFVAG). Catalysis depends on residues Asp-119 and Asp-135. A helical membrane pass occupies residues 130–150 (IFNLADVFINIGIICLLIAAW).

Belongs to the peptidase A8 family.

It localises to the cell inner membrane. It carries out the reaction Release of signal peptides from bacterial membrane prolipoproteins. Hydrolyzes -Xaa-Yaa-Zaa-|-(S,diacylglyceryl)Cys-, in which Xaa is hydrophobic (preferably Leu), and Yaa (Ala or Ser) and Zaa (Gly or Ala) have small, neutral side chains.. The protein operates within protein modification; lipoprotein biosynthesis (signal peptide cleavage). In terms of biological role, this protein specifically catalyzes the removal of signal peptides from prolipoproteins. The sequence is that of Lipoprotein signal peptidase from Cyanothece sp. (strain PCC 7425 / ATCC 29141).